Here is a 408-residue protein sequence, read N- to C-terminus: Phosphopentomutase (408 aa).

Residues Asp-10, Asp-307, His-312, Asp-348, His-349, and His-360 each coordinate Mn(2+).

This sequence belongs to the phosphopentomutase family. Mn(2+) is required as a cofactor.

The protein resides in the cytoplasm. It catalyses the reaction 2-deoxy-alpha-D-ribose 1-phosphate = 2-deoxy-D-ribose 5-phosphate. The catalysed reaction is alpha-D-ribose 1-phosphate = D-ribose 5-phosphate. It participates in carbohydrate degradation; 2-deoxy-D-ribose 1-phosphate degradation; D-glyceraldehyde 3-phosphate and acetaldehyde from 2-deoxy-alpha-D-ribose 1-phosphate: step 1/2. In terms of biological role, isomerase that catalyzes the conversion of deoxy-ribose 1-phosphate (dRib-1-P) and ribose 1-phosphate (Rib-1-P) to deoxy-ribose 5-phosphate (dRib-5-P) and ribose 5-phosphate (Rib-5-P), respectively. The protein is Phosphopentomutase of Buchnera aphidicola subsp. Baizongia pistaciae (strain Bp).